We begin with the raw amino-acid sequence, 236 residues long: Uridylate kinase (236 aa).

An ATP-binding site is contributed by 12–15; that stretch reads KLSG. Residues 20–25 are involved in allosteric activation by GTP; that stretch reads GEKGFG. UMP is bound at residue Gly-54. Gly-55 and Arg-59 together coordinate ATP. Residues Asp-72 and 133 to 140 contribute to the UMP site; that span reads TGNPYFST. The ATP site is built by Asn-161, Tyr-166, and Asp-169.

The protein belongs to the UMP kinase family. As to quaternary structure, homohexamer.

The protein localises to the cytoplasm. The catalysed reaction is UMP + ATP = UDP + ADP. It participates in pyrimidine metabolism; CTP biosynthesis via de novo pathway; UDP from UMP (UMPK route): step 1/1. With respect to regulation, allosterically activated by GTP. Inhibited by UTP. In terms of biological role, catalyzes the reversible phosphorylation of UMP to UDP. The protein is Uridylate kinase of Alkaliphilus oremlandii (strain OhILAs) (Clostridium oremlandii (strain OhILAs)).